Consider the following 185-residue polypeptide: Ribosome-recycling factor (185 aa).

This sequence belongs to the RRF family.

It localises to the cytoplasm. Functionally, responsible for the release of ribosomes from messenger RNA at the termination of protein biosynthesis. May increase the efficiency of translation by recycling ribosomes from one round of translation to another. This is Ribosome-recycling factor from Heliobacterium modesticaldum (strain ATCC 51547 / Ice1).